A 148-amino-acid polypeptide reads, in one-letter code: Major microfilarial sheath protein (148 aa).

A signal peptide spans 1-18; that stretch reads MCCKAILSFCILSSLGNA. Positions 19–43 are cleaved as a propeptide — removed in mature form; the sequence is LYFGSHRPQYLREVGQRQYPFEPQA. 5 consecutive repeats follow at residues 46 to 50, 54 to 58, 59 to 63, 64 to 68, and 71 to 75; these read MLPVP, MGPQP, MEPQP, and MGPQS. Residues 46-75 are repeat-rich region; sequence MLPVPQQPMGPQPMGPQPMEPQPLPMGPQS. The segment covering 52–73 has biased composition (pro residues); the sequence is QPMGPQPMGPQPMEPQPLPMGP. The segment at 52–80 is disordered; sequence QPMGPQPMGPQPMEPQPLPMGPQSPQMQV.

It to B.pahangi filarial sheath protein. In terms of processing, O-glycosylated.

The polypeptide is Major microfilarial sheath protein (GP22) (Litomosoides carinii).